The sequence spans 450 residues: 6-phospho-beta-glucosidase (450 aa).

5-73 (LKVVTIGGGS…VPMKLYKTLD (69 aa)) is an NAD(+) binding site. The substrate site is built by Arg96 and Asn150. The Mn(2+) site is built by Cys172 and His203. Tyr258 serves as the catalytic Proton acceptor.

Homotetramer. Requires NAD(+) as cofactor. Mn(2+) serves as cofactor. Co(2+) is required as a cofactor. The cofactor is Ni(2+).

The enzyme catalyses 6-phospho-beta-D-glucosyl-(1-&gt;4)-D-glucose + H2O = D-glucose 6-phosphate + D-glucose. Functionally, hydrolyzes a wide variety of P-beta-glucosides including cellobiose-6P, salicin-6P, arbutin-6P, gentiobiose-6P, methyl-beta-glucoside-6P and p-nitrophenyl-beta-D-glucopyranoside-6P. Is also able to hydrolyze phospho-N,N'-diacetylchitobiose. The protein is 6-phospho-beta-glucosidase (chbF) of Escherichia coli (strain K12).